We begin with the raw amino-acid sequence, 913 residues long: SUN domain-containing protein 1 (913 aa).

The interval 1–139 is LMNA-binding; the sequence is MDFSRLHTYT…VLRHPVLDES (139 aa). At 1 to 415 the chain is on the nuclear side; the sequence is MDFSRLHTYT…LTRCLRNICK (415 aa). S48 and S66 each carry phosphoserine. Over residues 69-81 the composition is skewed to polar residues; it reads SQAIDSHISTSRA. Residues 69–120 form a disordered region; the sequence is SQAIDSHISTSRATPAKGRETRTVKQRRSASKPAFSINHLSGKGLSSSTSHD. Residues 108-120 are compositionally biased toward low complexity; it reads LSGKGLSSSTSHD. S139 is modified (phosphoserine). Positions 209 to 302 are SYNE2-binding; sequence SRVYSRDRTL…MTAGELSRVD (94 aa). The interval 223–302 is EMD-binding; the sequence is VSFYLDRTLW…MTAGELSRVD (80 aa). Residues 416–436 form a helical membrane-spanning segment; the sequence is VFVLLLPLLLLLGAGVSLWGQ. The Perinuclear space segment spans residues 437–913; that stretch reads GNFFSLLPVL…RFRVHGEPIQ (477 aa). The interval 456 to 485 is disordered; the sequence is RVDDSKGMHRPGPLPPSPPPKVDHKASQWP. 2 coiled-coil regions span residues 491–533 and 563–638; these read GQKV…EGLS and HHDH…CEQA. The tract at residues 703-913 is sufficient for interaction with SYNE1 and SYNE2; the sequence is TSEAIVSAVN…RFRVHGEPIQ (211 aa). In terms of domain architecture, SUN spans 751–912; sequence GGSILSTRCS…YRFRVHGEPI (162 aa).

As to quaternary structure, core component of the LINC complex which is composed of inner nuclear membrane SUN domain-containing proteins coupled to outer nuclear membrane KASH domain-containing nesprins. SUN and KASH domain-containing proteins seem to bind each other promiscuously; however, differentially expression of LINC complex constituents is giving rise to specific assemblies. At least SUN1/2-containing core LINC complexes are proposed to be hexameric composed of three protomers of each KASH and SUN domain-containing protein. Interacts with KASH5 (via the last 22 amino acids); this interaction mediates KASH5 telomere localization by forming a SUN1:KASH5 LINC complex. Isoform 5 is proposed to form a non-nuclear spermatogenesis-specific LINC complex with SYNE3 during sperm head formation. Interacts with SYNE2 and SYNE1; probably forming respective LINC complexes. Interacts with A-type lamin with a strong preference for unprocessed A-type lamin compared with the mature protein. Interaction with lamins B1 and C is hardly detectable. Interacts with NAT10. Interacts with EMD and TSNAX. Associates with the nuclear pore complex (NPC). Interacts with CCDC79/TERB1; promoting the accumulation of the LINC complex complexes at the telomere-nuclear envelope attachment sites. Interacts with IRAG2. Interacts (via KASH domain) with TMEM258. In terms of processing, the disulfide bond with KASH domain-containing nesprins is required for stability of the respective LINC complexes under tensile forces. In terms of tissue distribution, widely expressed. Expressed in cochlear outer hair cells (at protein level). Seven isoforms are expressed in testis including testis-specific isoform 5. Isoform 5 is the only isoform expressed at the end of sperm differentiation. Six isoforms are expressed in muscle, heart and brain, four isoforms in kidney and three isoforms in liver.

The protein localises to the nucleus inner membrane. Its subcellular location is the cytoplasmic vesicle. It is found in the secretory vesicle. The protein resides in the acrosome outer membrane. Functionally, as a component of the LINC (LInker of Nucleoskeleton and Cytoskeleton) complex involved in the connection between the nuclear lamina and the cytoskeleton. The nucleocytoplasmic interactions established by the LINC complex play an important role in the transmission of mechanical forces across the nuclear envelope and in nuclear movement and positioning. Required for interkinetic nuclear migration (INM) and essential for nucleokinesis and centrosome-nucleus coupling during radial neuronal migration in the cerebral cortex and during glial migration. Involved in telomere attachment to nuclear envelope in the prophase of meiosis implicating a SUN1/2:KASH5 LINC complex in which SUN1 and SUN2 seem to act at least partial redundantly. Required for gametogenesis and involved in selective gene expression of coding and non-coding RNAs needed for gametogenesis. Helps to define the distribution of nuclear pore complexes (NPCs). Required for efficient localization of SYNE4 in the nuclear envelope. May be involved in nuclear remodeling during sperm head formation in spermatogenesis. May play a role in DNA repair by suppressing non-homologous end joining repair to facilitate the repair of DNA cross-links. In terms of biological role, isoform 5 may be involved in nuclear remodeling during sperm head formation in spermatogenesis. A probable SUN1 isoform 5:SYNE3 LINC complex may tether spermatid nuclei to anterior cytoskeletal structures such as actin filaments present at membraneous junctions of spermatids and Sertoli cells. This Mus musculus (Mouse) protein is SUN domain-containing protein 1.